We begin with the raw amino-acid sequence, 85 residues long: Small ribosomal subunit protein bS16c (85 aa).

Belongs to the bacterial ribosomal protein bS16 family.

It is found in the plastid. It localises to the chloroplast. The sequence is that of Small ribosomal subunit protein bS16c from Nicotiana tabacum (Common tobacco).